Here is a 251-residue protein sequence, read N- to C-terminus: uncharacterized protein (251 aa).

To M.jannaschii MJ1311.

This is an uncharacterized protein from Methanocaldococcus jannaschii (strain ATCC 43067 / DSM 2661 / JAL-1 / JCM 10045 / NBRC 100440) (Methanococcus jannaschii).